Consider the following 411-residue polypeptide: Tetra-peptide repeat homeobox protein 1 (411 aa).

The segment at residues 3–24 is a DNA-binding region (homeobox); that stretch reads SLREQQLQVWFKNRRAKLARER. Disordered regions lie at residues 20-63, 88-246, 286-340, and 363-411; these read LARE…SGIL, IPAA…ISGP, PILS…SPDA, and LEGS…LLDL. Residues 27-55 are compositionally biased toward low complexity; sequence QQQPQRVPGQRGRGARAAPLVPAASASAP. Pro residues-rich tracts occupy residues 95-139 and 149-246; these read GPGP…PGPI and FRGP…ISGP. Over residues 295 to 307 the composition is skewed to low complexity; sequence SPGSLPGLAPILG. A compositionally biased stretch (pro residues) spans 319–335; it reads APIPGPGSLPAPAPLWP. Polar residues-rich tracts occupy residues 366 to 376 and 388 to 402; these read SSVSTMTSQYQ and GSQP…NENH.

Belongs to the paired homeobox family.

The protein localises to the nucleus. Transcription factor expressed after fertilization required for zygotic genome activation (ZGA), a critical event in early embryonic development during which the developmental control passes from maternally provided mRNAs to the expression of the zygotic genome after fertilization. Binds and activates expression of key ZGA marker genes, such as NANOGNB, ZSCAN4, DUXB, KLF5 and DPPA3. Binds to regulatory DNA sequences containing a 5'-TAATCC-3' sequence motif. The polypeptide is Tetra-peptide repeat homeobox protein 1 (Homo sapiens (Human)).